A 254-amino-acid polypeptide reads, in one-letter code: Alcohol dehydrogenase 1 (254 aa).

10–33 (FVAGLGGIGLDTSREIVKSGPKNL) lines the NAD(+) pocket. Ser-138 contributes to the substrate binding site. Tyr-151 (proton acceptor) is an active-site residue.

Belongs to the short-chain dehydrogenases/reductases (SDR) family. As to quaternary structure, homodimer.

It carries out the reaction a primary alcohol + NAD(+) = an aldehyde + NADH + H(+). The catalysed reaction is a secondary alcohol + NAD(+) = a ketone + NADH + H(+). The sequence is that of Alcohol dehydrogenase 1 (Adh1) from Drosophila montana (Fruit fly).